The primary structure comprises 281 residues: NADPH-dependent 7-cyano-7-deazaguanine reductase (281 aa).

87-89 (IES) provides a ligand contact to substrate. 89–90 (SK) is an NADPH binding site. The active-site Thioimide intermediate is the Cys-188. The Proton donor role is filled by Asp-195. 227–228 (HE) is a binding site for substrate. An NADPH-binding site is contributed by 256–257 (RG). The interval 261–281 (INPYRSTEQAKPDHNHRMARQ) is disordered. Positions 268–281 (EQAKPDHNHRMARQ) are enriched in basic and acidic residues.

The protein belongs to the GTP cyclohydrolase I family. QueF type 2 subfamily. As to quaternary structure, homodimer.

The protein localises to the cytoplasm. It catalyses the reaction 7-aminomethyl-7-carbaguanine + 2 NADP(+) = 7-cyano-7-deazaguanine + 2 NADPH + 3 H(+). Its pathway is tRNA modification; tRNA-queuosine biosynthesis. Its function is as follows. Catalyzes the NADPH-dependent reduction of 7-cyano-7-deazaguanine (preQ0) to 7-aminomethyl-7-deazaguanine (preQ1). This Vibrio vulnificus (strain CMCP6) protein is NADPH-dependent 7-cyano-7-deazaguanine reductase.